The following is a 708-amino-acid chain: Assimilatory nitrate reductase (708 aa).

One can recognise a 4Fe-4S Mo/W bis-MGD-type domain in the interval 15 to 73; that stretch reads TKQVPTTCMRCAVGCGHVHLGSENAYGLETVRGDPSHPVNNGLACGRGIRESADPAGEW. [4Fe-4S] cluster-binding residues include Cys22, Cys25, Cys29, and Cys59. The interval 586–613 is disordered; it reads TTGREADGYNTGVRSRSDTPEEPVARVN.

It belongs to the prokaryotic molybdopterin-containing oxidoreductase family. NasA/NapA/NarB subfamily. In terms of assembly, is probably a monomer. Initially characterized as a dimer of proteins with a MW of 105 and 50 kDa. It depends on [4Fe-4S] cluster as a cofactor. Requires Mo-bis(molybdopterin guanine dinucleotide) as cofactor.

It localises to the cytoplasm. It catalyses the reaction nitrite + 2 oxidized [2Fe-2S]-[ferredoxin] + H2O = nitrate + 2 reduced [2Fe-2S]-[ferredoxin] + 2 H(+). It functions in the pathway nitrogen metabolism; nitrate reduction (assimilation). Inhibited by cyanide and azide. In terms of biological role, nitrate reductase is a key enzyme involved in the first step of nitrate assimilation. Catalyzes the reduction of nitrate to nitrite, using ferredoxin as the electron donor. Can use reduced methyl viologen but neither NADPH nor NADH as electron donors. The protein is Assimilatory nitrate reductase of Haloferax mediterranei (strain ATCC 33500 / DSM 1411 / JCM 8866 / NBRC 14739 / NCIMB 2177 / R-4) (Halobacterium mediterranei).